A 111-amino-acid polypeptide reads, in one-letter code: MESSAKLSFARLSPRKTRLVVDMVRGKGIQNALNTLRFSPQPSAKLVSKLLSSAVANAEQKGVADVDRLYVKTIYVNGGTVLKRFVPRAMGRASKIRKPTSHICVVLAEKK.

It belongs to the universal ribosomal protein uL22 family. As to quaternary structure, part of the 50S ribosomal subunit.

This protein binds specifically to 23S rRNA; its binding is stimulated by other ribosomal proteins, e.g. L4, L17, and L20. It is important during the early stages of 50S assembly. It makes multiple contacts with different domains of the 23S rRNA in the assembled 50S subunit and ribosome. Its function is as follows. The globular domain of the protein is located near the polypeptide exit tunnel on the outside of the subunit, while an extended beta-hairpin is found that lines the wall of the exit tunnel in the center of the 70S ribosome. The protein is Large ribosomal subunit protein uL22 of Geotalea uraniireducens (strain Rf4) (Geobacter uraniireducens).